Reading from the N-terminus, the 502-residue chain is Probable cytosol aminopeptidase 2 (502 aa).

Positions 269 and 274 each coordinate Mn(2+). Lys-281 is an active-site residue. 3 residues coordinate Mn(2+): Asp-292, Asp-351, and Glu-353. Arg-355 is a catalytic residue.

The protein belongs to the peptidase M17 family. Mn(2+) is required as a cofactor.

The protein localises to the cytoplasm. It carries out the reaction Release of an N-terminal amino acid, Xaa-|-Yaa-, in which Xaa is preferably Leu, but may be other amino acids including Pro although not Arg or Lys, and Yaa may be Pro. Amino acid amides and methyl esters are also readily hydrolyzed, but rates on arylamides are exceedingly low.. The catalysed reaction is Release of an N-terminal amino acid, preferentially leucine, but not glutamic or aspartic acids.. Presumably involved in the processing and regular turnover of intracellular proteins. Catalyzes the removal of unsubstituted N-terminal amino acids from various peptides. The polypeptide is Probable cytosol aminopeptidase 2 (pepA2) (Shewanella oneidensis (strain ATCC 700550 / JCM 31522 / CIP 106686 / LMG 19005 / NCIMB 14063 / MR-1)).